A 269-amino-acid polypeptide reads, in one-letter code: GTP cyclohydrolase FolE2 (269 aa).

Belongs to the GTP cyclohydrolase IV family.

The enzyme catalyses GTP + H2O = 7,8-dihydroneopterin 3'-triphosphate + formate + H(+). Its pathway is cofactor biosynthesis; 7,8-dihydroneopterin triphosphate biosynthesis; 7,8-dihydroneopterin triphosphate from GTP: step 1/1. In terms of biological role, converts GTP to 7,8-dihydroneopterin triphosphate. This Burkholderia multivorans (strain ATCC 17616 / 249) protein is GTP cyclohydrolase FolE2.